Reading from the N-terminus, the 275-residue chain is Pyridoxal phosphate homeostasis protein (275 aa).

Phosphoserine is present on Ser6. Position 47 is an N6-(pyridoxal phosphate)lysine (Lys47). The residue at position 69 (Tyr69) is a Phosphotyrosine. Lys125 bears the N6-succinyllysine mark. Phosphoserine occurs at positions 226 and 244.

The protein belongs to the pyridoxal phosphate-binding protein YggS/PROSC family.

Pyridoxal 5'-phosphate (PLP)-binding protein, which may be involved in intracellular homeostatic regulation of pyridoxal 5'-phosphate (PLP), the active form of vitamin B6. In Pongo abelii (Sumatran orangutan), this protein is Pyridoxal phosphate homeostasis protein.